The following is a 29-amino-acid chain: GWTLNSAGYLLGPHAIDNHRSFHDKHGLA.

An Alanine amide modification is found at A29.

It belongs to the galanin family.

The protein localises to the secreted. In terms of biological role, contracts smooth muscle of the gastrointestinal and genitourinary tract, regulates growth hormone release, modulates insulin release, and may be involved in the control of adrenal secretion. The chain is Galanin (GAL) from Ovis aries (Sheep).